The chain runs to 150 residues: Helix-loop-helix protein hlh-12 (150 aa).

The segment at methionine 1–glutamine 24 is disordered. The segment covering asparagine 11–glutamine 24 has biased composition (basic and acidic residues). A basic motif region spans residues aspartate 13–valine 26. The region spanning aspartate 13 to leucine 65 is the bHLH domain. The tract at residues serine 27–leucine 65 is helix-loop-helix motif.

Forms a heterodimer with helix-loop-helix protein hlh-2.

Its subcellular location is the nucleus. Its function is as follows. Transcription factor which binds the E box motif 5'-GCAGGTG-3'. Involved in migration of the gonadal leader cells; distal tip cells (DTCs) in hermaphrodites, and linker cells in males. Positively regulates expression of alpha integrin ina-1 and ADAMTS protease gon-1. The sequence is that of Helix-loop-helix protein hlh-12 from Caenorhabditis elegans.